The following is a 536-amino-acid chain: Chromosomal replication initiator protein DnaA (536 aa).

The interval 1–72 (MNDFWQHCSA…DLARDFWNAP (72 aa)) is domain I, interacts with DnaA modulators. A domain II region spans residues 72 to 199 (PIEVQFVLDP…EAADSMYERS (128 aa)). The interval 97-121 (RAPLPAANPAPVTAGPAPSGAADAN) is disordered. Over residues 105–121 (PAPVTAGPAPSGAADAN) the composition is skewed to low complexity. The interval 200–416 (KLNPVLTFDN…GALRKILAYS (217 aa)) is domain III, AAA+ region. ATP-binding residues include Gly-244, Gly-246, Lys-247, and Thr-248. Residues 417–536 (KFHGREITIE…LHVLEQTLKG (120 aa)) are domain IV, binds dsDNA.

Belongs to the DnaA family. As to quaternary structure, oligomerizes as a right-handed, spiral filament on DNA at oriC.

The protein resides in the cytoplasm. Plays an essential role in the initiation and regulation of chromosomal replication. ATP-DnaA binds to the origin of replication (oriC) to initiate formation of the DNA replication initiation complex once per cell cycle. Binds the DnaA box (a 9 base pair repeat at the origin) and separates the double-stranded (ds)DNA. Forms a right-handed helical filament on oriC DNA; dsDNA binds to the exterior of the filament while single-stranded (ss)DNA is stabiized in the filament's interior. The ATP-DnaA-oriC complex binds and stabilizes one strand of the AT-rich DNA unwinding element (DUE), permitting loading of DNA polymerase. After initiation quickly degrades to an ADP-DnaA complex that is not apt for DNA replication. Binds acidic phospholipids. The sequence is that of Chromosomal replication initiator protein DnaA from Burkholderia thailandensis (strain ATCC 700388 / DSM 13276 / CCUG 48851 / CIP 106301 / E264).